The chain runs to 282 residues: MTKILYGNEVALKIKEDLNLRIDKLKEKNIIPKLAILRMGNKPDDIAYERSIIKSCEKLNIETKVEELSEDILEEDFLKLMESLNNEKEIHGILVFRPYPKHLNENTINSSIALNKDVDCMHPLNLERIFEGDLNGFMPCTPEAVIEILKYYDIDLKGKNIVIINRSMVVGKPLSMMLLSHNATVTICHSKTIDLPSITKKADIVVTAIGKAKLIKEEYFNEDSIVMDVSINVDENGKLCGDVDFENVKEKVGAITPVPKGVGSVTTTLLLKHIVDAAERNS.

Residues Asn-165–Ser-167, Ser-190, and Ile-231 contribute to the NADP(+) site.

This sequence belongs to the tetrahydrofolate dehydrogenase/cyclohydrolase family. Homodimer.

It carries out the reaction (6R)-5,10-methylene-5,6,7,8-tetrahydrofolate + NADP(+) = (6R)-5,10-methenyltetrahydrofolate + NADPH. The enzyme catalyses (6R)-5,10-methenyltetrahydrofolate + H2O = (6R)-10-formyltetrahydrofolate + H(+). The protein operates within one-carbon metabolism; tetrahydrofolate interconversion. Functionally, catalyzes the oxidation of 5,10-methylenetetrahydrofolate to 5,10-methenyltetrahydrofolate and then the hydrolysis of 5,10-methenyltetrahydrofolate to 10-formyltetrahydrofolate. The sequence is that of Bifunctional protein FolD from Clostridium botulinum (strain Langeland / NCTC 10281 / Type F).